Consider the following 688-residue polypeptide: Glycine--tRNA ligase beta subunit (688 aa).

It belongs to the class-II aminoacyl-tRNA synthetase family. As to quaternary structure, tetramer of two alpha and two beta subunits.

It is found in the cytoplasm. The catalysed reaction is tRNA(Gly) + glycine + ATP = glycyl-tRNA(Gly) + AMP + diphosphate. In Geotalea uraniireducens (strain Rf4) (Geobacter uraniireducens), this protein is Glycine--tRNA ligase beta subunit.